Here is a 571-residue protein sequence, read N- to C-terminus: Proline--tRNA ligase (571 aa).

Belongs to the class-II aminoacyl-tRNA synthetase family. ProS type 1 subfamily. Homodimer.

It localises to the cytoplasm. The enzyme catalyses tRNA(Pro) + L-proline + ATP = L-prolyl-tRNA(Pro) + AMP + diphosphate. In terms of biological role, catalyzes the attachment of proline to tRNA(Pro) in a two-step reaction: proline is first activated by ATP to form Pro-AMP and then transferred to the acceptor end of tRNA(Pro). As ProRS can inadvertently accommodate and process non-cognate amino acids such as alanine and cysteine, to avoid such errors it has two additional distinct editing activities against alanine. One activity is designated as 'pretransfer' editing and involves the tRNA(Pro)-independent hydrolysis of activated Ala-AMP. The other activity is designated 'posttransfer' editing and involves deacylation of mischarged Ala-tRNA(Pro). The misacylated Cys-tRNA(Pro) is not edited by ProRS. This chain is Proline--tRNA ligase, found in Pseudomonas entomophila (strain L48).